The sequence spans 346 residues: Homeobox protein ceh-22 (346 aa).

Disordered regions lie at residues Met1 to Leu68 and Leu135 to Arg190. Over residues Ala9–Ser24 the composition is skewed to low complexity. A compositionally biased stretch (polar residues) spans Glu25–Thr44. A compositionally biased stretch (low complexity) spans Ala49–Ala67. The segment covering Leu147–Asn156 has biased composition (polar residues). The segment covering Glu166–Asp182 has biased composition (acidic residues). The segment at residues Lys189–His248 is a DNA-binding region (homeobox).

The protein belongs to the NK-2 homeobox family.

The protein localises to the nucleus. Its function is as follows. Involved in combinatorial activation of gene expression in pharyngeal muscle. Specifically binds a site necessary for activity of the B subelement of myo-2 enhancer. In terms of biological role, regulates distal tip cell fate. The protein is Homeobox protein ceh-22 (ceh-22) of Caenorhabditis elegans.